The sequence spans 156 residues: MPRRRVIGQRKILPDPKFGSELLAKFVNILMVDGKKSTAESIVYSALETLAQRSGKSELEAFEVALENVRPTVEVKSRRVGGSTYQVPVEVRPVRRNALAMRWIVEAARKRGDKSMALRLANELSDAAENKGTAVKKREDVHRMAEANKAFAHYRW.

The protein belongs to the universal ribosomal protein uS7 family. Part of the 30S ribosomal subunit. Contacts proteins S9 and S11.

Functionally, one of the primary rRNA binding proteins, it binds directly to 16S rRNA where it nucleates assembly of the head domain of the 30S subunit. Is located at the subunit interface close to the decoding center, probably blocks exit of the E-site tRNA. This is Small ribosomal subunit protein uS7 from Salmonella agona (strain SL483).